The sequence spans 201 residues: MIEALQDLGHQIEAKRPECVLSWDIAHGELNIDVKPANIAGLVEFLRVDSACRFSTLVDITAVDYPERTKRFDVVYHLLSMYQNQRIRLRAAVREEDMVPSIVDVHPSANWFEREVFDMFGILFTGHPDLRRLLTDYGFRGHPLRKDFPTTGYTEVRYDEAQKRVVYEPVKLVQEYRQFDFMSPWEGAEYILPGDEKEIAK.

This sequence belongs to the complex I 30 kDa subunit family. As to quaternary structure, NDH-1 is composed of 14 different subunits. Subunits NuoB, C, D, E, F, and G constitute the peripheral sector of the complex.

The protein localises to the cell inner membrane. It catalyses the reaction a quinone + NADH + 5 H(+)(in) = a quinol + NAD(+) + 4 H(+)(out). NDH-1 shuttles electrons from NADH, via FMN and iron-sulfur (Fe-S) centers, to quinones in the respiratory chain. The immediate electron acceptor for the enzyme in this species is believed to be ubiquinone. Couples the redox reaction to proton translocation (for every two electrons transferred, four hydrogen ions are translocated across the cytoplasmic membrane), and thus conserves the redox energy in a proton gradient. In Ruegeria sp. (strain TM1040) (Silicibacter sp.), this protein is NADH-quinone oxidoreductase subunit C.